The following is a 59-amino-acid chain: Single-pass membrane and coiled-coil domain-containing protein 4 (59 aa).

Residues 1–23 (MRQLKGKPKKETSKDKKERKQAM) form a disordered region. Residues 9-22 (KKETSKDKKERKQA) show a composition bias toward basic and acidic residues. A coiled-coil region spans residues 9–31 (KKETSKDKKERKQAMQEARQQIT). A helical membrane pass occupies residues 32-52 (TVVLPTLAVVVLLIVVFVYVA).

It belongs to the SMCO4 family.

It localises to the membrane. In Homo sapiens (Human), this protein is Single-pass membrane and coiled-coil domain-containing protein 4 (SMCO4).